Consider the following 424-residue polypeptide: Deoxyguanosinetriphosphate triphosphohydrolase-like protein (424 aa).

The span at 1 to 10 (MEGTAPPTPY) shows a compositional bias: pro residues. The tract at residues 1-31 (MEGTAPPTPYDPASVARYAPEPDKRPGRTAF) is disordered. Over residues 20-31 (PEPDKRPGRTAF) the composition is skewed to basic and acidic residues. Residues 70–220 (RLTHSLECAQ…MDWADDVAYS (151 aa)) form the HD domain.

Belongs to the dGTPase family. Type 2 subfamily.

This is Deoxyguanosinetriphosphate triphosphohydrolase-like protein from Streptomyces coelicolor (strain ATCC BAA-471 / A3(2) / M145).